Consider the following 261-residue polypeptide: Zinc import ATP-binding protein ZnuC (261 aa).

Residues 6–227 (IQLNNIHLRF…PEYLKLFGKQ (222 aa)) form the ABC transporter domain. Residue 38 to 45 (GPNGAGKS) participates in ATP binding.

Belongs to the ABC transporter superfamily. Zinc importer (TC 3.A.1.15.5) family. In terms of assembly, the complex is composed of two ATP-binding proteins (ZnuC), two transmembrane proteins (ZnuB) and a solute-binding protein (ZnuA).

The protein localises to the cell inner membrane. It catalyses the reaction Zn(2+)(out) + ATP(in) + H2O(in) = Zn(2+)(in) + ADP(in) + phosphate(in) + H(+)(in). Part of the ABC transporter complex ZnuABC involved in zinc import. Responsible for energy coupling to the transport system. The polypeptide is Zinc import ATP-binding protein ZnuC (Saccharophagus degradans (strain 2-40 / ATCC 43961 / DSM 17024)).